Reading from the N-terminus, the 107-residue chain is MEYRTDQVPMSPRSVQGAPGTLPIRDHLPWSIFNLFYMNVCCLGLTAMIFSVKSRDRKVVGDVEGARHYGSTARSLNIAATVLGILLIIILIGLAATGTIQALKYKG.

Residues 1 to 31 are Extracellular-facing; that stretch reads MEYRTDQVPMSPRSVQGAPGTLPIRDHLPWS. The chain crosses the membrane as a helical span at residues 32–52; the sequence is IFNLFYMNVCCLGLTAMIFSV. S-palmitoyl cysteine attachment occurs at residues Cys-41 and Cys-42. Residues 53 to 77 are Cytoplasmic-facing; the sequence is KSRDRKVVGDVEGARHYGSTARSLN. The helical transmembrane segment at 78–98 threads the bilayer; sequence IAATVLGILLIIILIGLAATG. The Extracellular segment spans residues 99-107; that stretch reads TIQALKYKG.

The protein belongs to the CD225/Dispanin family. In terms of tissue distribution, expressed various cell types in torpedo electric organ and muscle, especially fibroblasts, capillary endothelial cells, and axonal cuff cells.

The protein resides in the cell membrane. The protein is Dispanin subfamily A member 2b of Torpedo marmorata (Marbled electric ray).